Reading from the N-terminus, the 407-residue chain is Arrestin homolog (407 aa).

It belongs to the arrestin family.

This chain is Arrestin homolog, found in Locusta migratoria (Migratory locust).